The chain runs to 165 residues: Sulfopyruvate decarboxylase subunit alpha (165 aa).

This sequence belongs to the ComD family. Heterododecamer composed of 6 subunits alpha and 6 subunits beta.

The catalysed reaction is 3-sulfopyruvate + H(+) = sulfoacetaldehyde + CO2. It participates in cofactor biosynthesis; coenzyme M biosynthesis; sulfoacetaldehyde from phosphoenolpyruvate and sulfite: step 4/4. In terms of biological role, involved in the biosynthesis of the coenzyme M (2-mercaptoethanesulfonic acid). Catalyzes the decarboxylation of sulfopyruvate to sulfoacetaldehyde. This Methanothermobacter thermautotrophicus (strain ATCC 29096 / DSM 1053 / JCM 10044 / NBRC 100330 / Delta H) (Methanobacterium thermoautotrophicum) protein is Sulfopyruvate decarboxylase subunit alpha.